We begin with the raw amino-acid sequence, 119 residues long: Ribonuclease P protein component (119 aa).

The protein belongs to the RnpA family. As to quaternary structure, consists of a catalytic RNA component (M1 or rnpB) and a protein subunit.

The catalysed reaction is Endonucleolytic cleavage of RNA, removing 5'-extranucleotides from tRNA precursor.. Functionally, RNaseP catalyzes the removal of the 5'-leader sequence from pre-tRNA to produce the mature 5'-terminus. It can also cleave other RNA substrates such as 4.5S RNA. The protein component plays an auxiliary but essential role in vivo by binding to the 5'-leader sequence and broadening the substrate specificity of the ribozyme. The polypeptide is Ribonuclease P protein component (Nitrosomonas europaea (strain ATCC 19718 / CIP 103999 / KCTC 2705 / NBRC 14298)).